The following is an 853-amino-acid chain: Stachyose synthase (853 aa).

The propeptide occupies Met1–Asn11.

The protein belongs to the glycosyl hydrolases 36 family.

Its subcellular location is the cytoplasm. It carries out the reaction alpha-D-galactosyl-(1-&gt;3)-1D-myo-inositol + raffinose = stachyose + myo-inositol. Its pathway is glycan metabolism; stachyose biosynthesis; stachyose from raffinose: step 1/1. In terms of biological role, catalyzes stachyose synthesis by transfer of a galactosyl moiety from galactinol to raffinose. Also catalyzes verbascose synthesis by galactosyl transfer from galactinol to stachyose or from one stachyose molecule to another. Oligosaccharides of the raffinose family play a protective role in maturation drying of seeds. They may act as cryoprotectants in frost-hardy plants. This is Stachyose synthase (STS1) from Pisum sativum (Garden pea).